A 607-amino-acid chain; its full sequence is MDYRSLGLKVGLEIHIQLNTKRKLFCHCPPVLRDDEPHFRIERRLHLSVSELGAVDPAVLWEVRKRRRYIYEGYRDTTCLVELDEEPPHLPDEEALATAVAVAKMFNAKIFDEIHVMRKIVIDGSNVSGFQRTMLIAYGGKKKILGYDIGVETIALEEDAARKIAEEGKTVVYRLDRLGIPLIEIATEPMSYPPQQVEEVAWIIGYSVKITGRAKRGLGTVRQDVNVSIAGGAKTEIKGVPDLSLIPKVIEYEVQRQLSLLKISEELRRRGVGKLELSTVDVTQVFTNTKSKIVKRVLETGGKVVAVKTPGFQKIFGVEVQPGRRFGTELADYVRAWTELGGLLHSDELPGYGITAEEVRDIISKLGVESFILLMGVDDRELEEAATVVVDRLNTALQGVPEETRGANPDGTTRFLRPRPGAARMYPETDIPPIRITFEILKKSEEIAKVSLEGKLSELTSLGLSKDLALQLIKSPYLEKFEDYVSKYKVPPQQIATILLNISRALAREGVEITDEKIASVLEALEKKIITKEAVEEVLRNMKAGESAEEVAKRLGLVRMSYEEVKKVVGEVVREVGKDRALGEVMRRYRGRIDVEDVRRALSELYF.

Belongs to the GatB/GatE family. GatE subfamily. As to quaternary structure, heterodimer of GatD and GatE.

The catalysed reaction is L-glutamyl-tRNA(Gln) + L-glutamine + ATP + H2O = L-glutaminyl-tRNA(Gln) + L-glutamate + ADP + phosphate + H(+). Its function is as follows. Allows the formation of correctly charged Gln-tRNA(Gln) through the transamidation of misacylated Glu-tRNA(Gln) in organisms which lack glutaminyl-tRNA synthetase. The reaction takes place in the presence of glutamine and ATP through an activated gamma-phospho-Glu-tRNA(Gln). The GatDE system is specific for glutamate and does not act on aspartate. This chain is Glutamyl-tRNA(Gln) amidotransferase subunit E, found in Pyrobaculum islandicum (strain DSM 4184 / JCM 9189 / GEO3).